The sequence spans 180 residues: Oligoribonuclease (180 aa).

The region spanning 7–168 (LVWIDLEMTG…QDIRDSIDEL (162 aa)) is the Exonuclease domain. Tyr128 is a catalytic residue.

Belongs to the oligoribonuclease family.

The protein resides in the cytoplasm. Its function is as follows. 3'-to-5' exoribonuclease specific for small oligoribonucleotides. The protein is Oligoribonuclease of Dichelobacter nodosus (strain VCS1703A).